Consider the following 402-residue polypeptide: S-adenosylmethionine synthase (402 aa).

Residue 137-142 participates in ATP binding; that stretch reads GQGSAD.

This sequence belongs to the AdoMet synthase 2 family. Requires Mg(2+) as cofactor.

The enzyme catalyses L-methionine + ATP + H2O = S-adenosyl-L-methionine + phosphate + diphosphate. Its pathway is amino-acid biosynthesis; S-adenosyl-L-methionine biosynthesis; S-adenosyl-L-methionine from L-methionine: step 1/1. Catalyzes the formation of S-adenosylmethionine from methionine and ATP. This chain is S-adenosylmethionine synthase, found in Pyrobaculum neutrophilum (strain DSM 2338 / JCM 9278 / NBRC 100436 / V24Sta) (Thermoproteus neutrophilus).